Reading from the N-terminus, the 149-residue chain is Large ribosomal subunit protein bL20m (149 aa).

Residues 1–9 constitute a mitochondrion transit peptide; that stretch reads MVFLSAPLW.

It belongs to the bacterial ribosomal protein bL20 family. Component of the mitochondrial ribosome large subunit (39S) which comprises a 16S rRNA and about 50 distinct proteins. Interacts with OXA1L.

It is found in the mitochondrion. This is Large ribosomal subunit protein bL20m (MRPL20) from Bos taurus (Bovine).